The chain runs to 700 residues: Tectonic-2 (700 aa).

The signal sequence occupies residues 1 to 25 (MGSLSPLSLLWGLLLLQGVLRPLRG). At 26–665 (DPVFIPPFIR…YYQGEPQSQC (640 aa)) the chain is on the extracellular side. N76, N82, N146, N156, and N389 each carry an N-linked (GlcNAc...) asparagine glycan. The helical transmembrane segment at 666–682 (VAKGLMLLSLLMLAILL) threads the bilayer. At 683–700 (RHPWVRMCKARDSAAIYH) the chain is on the cytoplasmic side.

Belongs to the tectonic family. As to quaternary structure, part of the tectonic-like complex (also named B9 complex). As to expression, significant expression is observed in brain, kidney and eye.

It is found in the membrane. The protein localises to the cytoplasm. Its subcellular location is the cytoskeleton. The protein resides in the cilium basal body. In terms of biological role, component of the tectonic-like complex, a complex localized at the transition zone of primary cilia and acting as a barrier that prevents diffusion of transmembrane proteins between the cilia and plasma membranes. Required for hedgehog signaling transduction. This Mus musculus (Mouse) protein is Tectonic-2 (Tctn2).